A 118-amino-acid chain; its full sequence is Small ribosomal subunit protein uS13 (118 aa).

Positions 99 to 118 (GQRTRTNARTRKGPRKAIKK) are disordered.

It belongs to the universal ribosomal protein uS13 family. Part of the 30S ribosomal subunit. Forms a loose heterodimer with protein S19. Forms two bridges to the 50S subunit in the 70S ribosome.

In terms of biological role, located at the top of the head of the 30S subunit, it contacts several helices of the 16S rRNA. In the 70S ribosome it contacts the 23S rRNA (bridge B1a) and protein L5 of the 50S subunit (bridge B1b), connecting the 2 subunits; these bridges are implicated in subunit movement. Contacts the tRNAs in the A and P-sites. This is Small ribosomal subunit protein uS13 from Xylella fastidiosa (strain M23).